A 163-amino-acid chain; its full sequence is MIALFVLMGLMAAASASSCCSSEDRANVMHNWDAAWSAAYSDRRVALAQAVFASLFSRDAAAQGLFSGVSADNPDSADFRAHCVRVVNGLDVAINMLNDPAVLNEQLAHLSAQHQARAGVAAAHFDVMAEAFAEVMPQVSSCFSSDSWNRCFARIANGISAGL.

A signal peptide spans 1–16 (MIALFVLMGLMAAASA). The 145-residue stretch at 19–163 (CCSSEDRANV…RIANGISAGL (145 aa)) folds into the Globin domain. C20 and C151 are joined by a disulfide. C83 serves as a coordination point for hydrogen sulfide. H114 contributes to the heme b binding site.

This sequence belongs to the globin family. In terms of assembly, the 400 kDa hemoglobin consists of a spherical 24-mer arranged as a double layer of dome-shaped dodecamers. Each dodecamer is composed of the 3-fold trimer of the tetramer A1-A2-B1-B2 having one intra-tetramer (A1-B2) disulfide bond and one inter-tetramer (B1-B2) disulfide bond per tetramer.

It is found in the secreted. Functionally, the extracellular giant hemoglobin is able to bind and transport oxygen and hydrosulfide simultaneously and reversibly at two different sites. This is Extracellular giant hemoglobin major globin subunit B2 (ghbB2) from Oligobrachia mashikoi (Beard worm).